A 49-amino-acid chain; its full sequence is Osteocalcin (49 aa).

Position 1 is a pyrrolidone carboxylic acid (glutamine 1). The region spanning 1-47 is the Gla domain; sequence QLINGQGAPAPYPDPLEPKREVCELNPDCDELADQVGLQDAYQRFYG. Position 9 is a 4-hydroxyproline (proline 9). Ca(2+) is bound by residues glutamate 17, glutamate 21, glutamate 24, and aspartate 30. Residues glutamate 17, glutamate 21, and glutamate 24 each carry the 4-carboxyglutamate modification. A disulfide bridge connects residues cysteine 23 and cysteine 29.

This sequence belongs to the osteocalcin/matrix Gla protein family. Gamma-carboxyglutamate residues are formed by vitamin K dependent carboxylation by GGCX. These residues are essential for the binding of calcium. Decarboxylation promotes the hormone activity.

Its subcellular location is the secreted. In terms of biological role, the carboxylated form is one of the main organic components of the bone matrix, which constitutes 1-2% of the total bone protein: it acts as a negative regulator of bone formation and is required to limit bone formation without impairing bone resorption or mineralization. The carboxylated form binds strongly to apatite and calcium. Its function is as follows. The uncarboxylated form acts as a hormone secreted by osteoblasts, which regulates different cellular processes, such as energy metabolism, male fertility and brain development. Regulates of energy metabolism by acting as a hormone favoring pancreatic beta-cell proliferation, insulin secretion and sensitivity and energy expenditure. Uncarboxylated osteocalcin hormone also promotes testosterone production in the testes: acts as a ligand for G protein-coupled receptor GPRC6A at the surface of Leydig cells, initiating a signaling response that promotes the expression of enzymes required for testosterone synthesis in a CREB-dependent manner. Also acts as a regulator of brain development: osteocalcin hormone crosses the blood-brain barrier and acts as a ligand for GPR158 on neurons, initiating a signaling response that prevents neuronal apoptosis in the hippocampus, favors the synthesis of all monoamine neurotransmitters and inhibits that of gamma-aminobutyric acid (GABA). Osteocalcin also crosses the placenta during pregnancy and maternal osteocalcin is required for fetal brain development. This Oryctolagus cuniculus (Rabbit) protein is Osteocalcin (BGLAP).